The sequence spans 105 residues: uncharacterized protein (105 aa).

This is an uncharacterized protein from Felis catus (Cat).